We begin with the raw amino-acid sequence, 533 residues long: DNA-directed RNA polymerase III subunit RPC3 (533 aa).

The segment at 161–183 (PLVPDTDSSDPGPPPPAPNLVIN) is disordered. At Ser-194 the chain carries Phosphoserine. A disordered region spans residues 197 to 228 (GKGKRRRSSDEDAAGEPKAKKPRCTDNEEPTP). The span at 211–222 (GEPKAKKPRCTD) shows a compositional bias: basic and acidic residues.

Belongs to the eukaryotic RPC3/POLR3C RNA polymerase subunit family. In terms of assembly, component of the RNA polymerase III complex consisting of 17 subunits: a ten-subunit horseshoe-shaped catalytic core composed of POLR3A/RPC1, POLR3B/RPC2, POLR1C/RPAC1, POLR1D/RPAC2, POLR3K/RPC10, POLR2E/RPABC1, POLR2F/RPABC2, POLR2H/RPABC3, POLR2K/RPABC4 and POLR2L/RPABC5; a mobile stalk composed of two subunits POLR3H/RPC8 and CRCP/RPC9, protruding from the core and functioning primarily in transcription initiation; and additional subunits homologous to general transcription factors of the RNA polymerase II machinery, POLR3C/RPC3-POLR3F/RPC6-POLR3G/RPC7 heterotrimer required for transcription initiation and POLR3D/RPC4-POLR3E/RPC5 heterodimer involved in both transcription initiation and termination. Directly interacts with POLR3G/RPC7 and POLR3GL. Directly interacts with POLR3F/RPC6. Interacts with GTF3C4. As part of the RNA polymerase III complex, interacts with PKP2.

It localises to the nucleus. DNA-dependent RNA polymerase catalyzes the transcription of DNA into RNA using the four ribonucleoside triphosphates as substrates. Specific peripheric component of RNA polymerase III (Pol III) which synthesizes small non-coding RNAs including 5S rRNA, snRNAs, tRNAs and miRNAs from at least 500 distinct genomic loci. Part of POLR3C/RPC3-POLR3F/RPC6-POLR3G/RPC7 heterotrimer, coordinates the dynamics of Pol III stalk and clamp modules during the transition from apo to elongation state. Pol III plays a key role in sensing and limiting infection by intracellular bacteria and DNA viruses. Acts as a nuclear and cytosolic DNA sensor involved in innate immune response. Can sense non-self dsDNA that serves as template for transcription into dsRNA. The non-self RNA polymerase III transcripts, such as Epstein-Barr virus-encoded RNAs (EBERs) induce type I interferon and NF-kappa-B through the RIG-I pathway. Preferentially binds single-stranded DNA (ssDNA) in a sequence-independent manner. The polypeptide is DNA-directed RNA polymerase III subunit RPC3 (Rattus norvegicus (Rat)).